The sequence spans 137 residues: Putative pumilio homolog 25 (137 aa).

2 Pumilio repeats span residues 70 to 105 (EFDSYFENLVKDRVGNYVVQRLIWGFKRTGIDLPHS) and 108 to 137 (SVLVTRSIHLCKHRYGYQVIEAFDRSTRLA).

The protein resides in the cytoplasm. In terms of biological role, sequence-specific RNA-binding protein that regulates translation and mRNA stability by binding the 3'-UTR of target mRNAs. The polypeptide is Putative pumilio homolog 25 (APUM25) (Arabidopsis thaliana (Mouse-ear cress)).